Consider the following 503-residue polypeptide: Probable cytosol aminopeptidase (503 aa).

K270 and D275 together coordinate Mn(2+). The active site involves K282. Positions 293, 352, and 354 each coordinate Mn(2+). The active site involves R356.

This sequence belongs to the peptidase M17 family. Mn(2+) serves as cofactor.

The protein resides in the cytoplasm. The enzyme catalyses Release of an N-terminal amino acid, Xaa-|-Yaa-, in which Xaa is preferably Leu, but may be other amino acids including Pro although not Arg or Lys, and Yaa may be Pro. Amino acid amides and methyl esters are also readily hydrolyzed, but rates on arylamides are exceedingly low.. The catalysed reaction is Release of an N-terminal amino acid, preferentially leucine, but not glutamic or aspartic acids.. In terms of biological role, presumably involved in the processing and regular turnover of intracellular proteins. Catalyzes the removal of unsubstituted N-terminal amino acids from various peptides. This chain is Probable cytosol aminopeptidase, found in Serratia proteamaculans (strain 568).